The primary structure comprises 428 residues: Glutamate-1-semialdehyde 2,1-aminomutase 1 (428 aa).

Lys-267 carries the post-translational modification N6-(pyridoxal phosphate)lysine.

Belongs to the class-III pyridoxal-phosphate-dependent aminotransferase family. HemL subfamily. As to quaternary structure, homodimer. It depends on pyridoxal 5'-phosphate as a cofactor.

Its subcellular location is the cytoplasm. The catalysed reaction is (S)-4-amino-5-oxopentanoate = 5-aminolevulinate. It functions in the pathway porphyrin-containing compound metabolism; protoporphyrin-IX biosynthesis; 5-aminolevulinate from L-glutamyl-tRNA(Glu): step 2/2. The chain is Glutamate-1-semialdehyde 2,1-aminomutase 1 from Staphylococcus aureus (strain bovine RF122 / ET3-1).